The sequence spans 108 residues: UPF0145 protein alr2488 (108 aa).

This sequence belongs to the UPF0145 family.

In Nostoc sp. (strain PCC 7120 / SAG 25.82 / UTEX 2576), this protein is UPF0145 protein alr2488.